A 270-amino-acid chain; its full sequence is NAD kinase (270 aa).

Residue aspartate 45 is the Proton acceptor of the active site. NAD(+) contacts are provided by residues 45 to 46 (DG), 121 to 122 (NE), lysine 147, aspartate 149, 160 to 165 (TAYSKS), and alanine 184.

This sequence belongs to the NAD kinase family. Requires a divalent metal cation as cofactor.

It localises to the cytoplasm. The enzyme catalyses NAD(+) + ATP = ADP + NADP(+) + H(+). Involved in the regulation of the intracellular balance of NAD and NADP, and is a key enzyme in the biosynthesis of NADP. Catalyzes specifically the phosphorylation on 2'-hydroxyl of the adenosine moiety of NAD to yield NADP. This is NAD kinase from Lactobacillus johnsonii (strain CNCM I-12250 / La1 / NCC 533).